The sequence spans 382 residues: Acetylornithine deacetylase (382 aa).

Histidine 79 contributes to the Zn(2+) binding site. Residue aspartate 81 is part of the active site. A Zn(2+)-binding site is contributed by aspartate 111. Glutamate 143 is an active-site residue. The Zn(2+) site is built by glutamate 144, glutamate 168, and histidine 354.

The protein belongs to the peptidase M20A family. ArgE subfamily. In terms of assembly, homodimer. Requires Zn(2+) as cofactor. It depends on Co(2+) as a cofactor. The cofactor is glutathione.

Its subcellular location is the cytoplasm. The enzyme catalyses N(2)-acetyl-L-ornithine + H2O = L-ornithine + acetate. The protein operates within amino-acid biosynthesis; L-arginine biosynthesis; L-ornithine from N(2)-acetyl-L-ornithine (linear): step 1/1. Functionally, catalyzes the hydrolysis of the amide bond of N(2)-acetylated L-amino acids. Cleaves the acetyl group from N-acetyl-L-ornithine to form L-ornithine, an intermediate in L-arginine biosynthesis pathway, and a branchpoint in the synthesis of polyamines. The sequence is that of Acetylornithine deacetylase from Pasteurella multocida (strain Pm70).